Consider the following 459-residue polypeptide: MSSGRIVQIIGAVIDVEFPRDAVPKVYDALVISEGNLTLEVQQQLGDGVVRTIALGSSEGLRRGLSVTNTNEPIKVPVGTQTLGRIMDVLGNPIDEAGPIGEQERMQIHRAAPAYEELAASEELLETGIKVIDLVCPFAKGGKVGLFGGAGVGKTVNMMELINNIAKEHSGLSVFAGVGERTREGNDFYHEMKDSNVVDKVAMVYGQMNEPPGNRLRVALTGLTMAEKFRDEGRDVLLFVDNIYRYTLAGTEVSALLGRMPSAVGYQPTLAEEMGVLQERITSTKIGSITSVQAVYVPADDLTDPSPATTFAHLDSTVVLSRDIAAKGIYPAIDPLDSTSRQLDPMVIGNEHYLVARGVQSVLQRYKELKDIIAILGMDELSEEDKLTVNRARKIERFLSQPFHVAEVFTGSPGKYVPLKETIRGFKGLLAGDYDHLPEQAFYMVGGIDEAIEKAGKLK.

148–155 (GGAGVGKT) contributes to the ATP binding site.

It belongs to the ATPase alpha/beta chains family. As to quaternary structure, F-type ATPases have 2 components, CF(1) - the catalytic core - and CF(0) - the membrane proton channel. CF(1) has five subunits: alpha(3), beta(3), gamma(1), delta(1), epsilon(1). CF(0) has three main subunits: a(1), b(2) and c(9-12). The alpha and beta chains form an alternating ring which encloses part of the gamma chain. CF(1) is attached to CF(0) by a central stalk formed by the gamma and epsilon chains, while a peripheral stalk is formed by the delta and b chains.

It is found in the cell inner membrane. The enzyme catalyses ATP + H2O + 4 H(+)(in) = ADP + phosphate + 5 H(+)(out). Functionally, produces ATP from ADP in the presence of a proton gradient across the membrane. The catalytic sites are hosted primarily by the beta subunits. This Cellvibrio japonicus (strain Ueda107) (Pseudomonas fluorescens subsp. cellulosa) protein is ATP synthase subunit beta.